Here is an 807-residue protein sequence, read N- to C-terminus: Glycerol-3-phosphate acyltransferase (807 aa).

Residues 308–313 (CHRSHM) carry the HXXXXD motif motif.

The protein belongs to the GPAT/DAPAT family.

The protein localises to the cell inner membrane. The enzyme catalyses sn-glycerol 3-phosphate + an acyl-CoA = a 1-acyl-sn-glycero-3-phosphate + CoA. The protein operates within phospholipid metabolism; CDP-diacylglycerol biosynthesis; CDP-diacylglycerol from sn-glycerol 3-phosphate: step 1/3. This is Glycerol-3-phosphate acyltransferase from Shewanella putrefaciens (strain CN-32 / ATCC BAA-453).